The chain runs to 415 residues: SVF1-like protein YDR222W (415 aa).

It belongs to the SVF1 family.

It localises to the cytoplasm. The protein is SVF1-like protein YDR222W of Saccharomyces cerevisiae (strain ATCC 204508 / S288c) (Baker's yeast).